The chain runs to 223 residues: Cytidylate kinase (223 aa).

10–18 (GPAGAGKST) provides a ligand contact to ATP.

Belongs to the cytidylate kinase family. Type 1 subfamily.

It localises to the cytoplasm. It catalyses the reaction CMP + ATP = CDP + ADP. It carries out the reaction dCMP + ATP = dCDP + ADP. This chain is Cytidylate kinase, found in Exiguobacterium sibiricum (strain DSM 17290 / CCUG 55495 / CIP 109462 / JCM 13490 / 255-15).